Here is a 180-residue protein sequence, read N- to C-terminus: ATP synthase subunit delta (180 aa).

The protein belongs to the ATPase delta chain family. In terms of assembly, F-type ATPases have 2 components, F(1) - the catalytic core - and F(0) - the membrane proton channel. F(1) has five subunits: alpha(3), beta(3), gamma(1), delta(1), epsilon(1). CF(0) has four main subunits: a(1), b(1), b'(1) and c(10-14). The alpha and beta chains form an alternating ring which encloses part of the gamma chain. F(1) is attached to F(0) by a central stalk formed by the gamma and epsilon chains, while a peripheral stalk is formed by the delta, b and b' chains.

It is found in the cellular thylakoid membrane. F(1)F(0) ATP synthase produces ATP from ADP in the presence of a proton or sodium gradient. F-type ATPases consist of two structural domains, F(1) containing the extramembraneous catalytic core and F(0) containing the membrane proton channel, linked together by a central stalk and a peripheral stalk. During catalysis, ATP synthesis in the catalytic domain of F(1) is coupled via a rotary mechanism of the central stalk subunits to proton translocation. Its function is as follows. This protein is part of the stalk that links CF(0) to CF(1). It either transmits conformational changes from CF(0) to CF(1) or is implicated in proton conduction. This Prochlorococcus marinus (strain MIT 9215) protein is ATP synthase subunit delta.